The chain runs to 229 residues: Ribulose-phosphate 3-epimerase (229 aa).

Position 12 (Ser12) interacts with substrate. Residues His37, Asp39, and His70 each contribute to the a divalent metal cation site. The Proton acceptor role is filled by Asp39. Substrate is bound by residues His70, 146 to 149, 181 to 183, and 203 to 204; these read GFTG, DGG, and AS. Asp181 lines the a divalent metal cation pocket. Catalysis depends on Asp181, which acts as the Proton donor.

It belongs to the ribulose-phosphate 3-epimerase family. Requires a divalent metal cation as cofactor.

The catalysed reaction is D-ribulose 5-phosphate = D-xylulose 5-phosphate. Its pathway is carbohydrate degradation. Functionally, catalyzes the reversible epimerization of D-ribulose 5-phosphate to D-xylulose 5-phosphate. The polypeptide is Ribulose-phosphate 3-epimerase (Chlamydia pneumoniae (Chlamydophila pneumoniae)).